We begin with the raw amino-acid sequence, 471 residues long: Alpha-amylase (471 aa).

A Pyrrolidone carboxylic acid modification is found at glutamine 1. The cysteines at positions 28 and 84 are disulfide-linked. 3 residues coordinate Ca(2+): asparagine 98, arginine 146, and aspartate 155. A disulfide bridge links cysteine 134 with cysteine 148. Arginine 183 is a chloride binding site. Aspartate 185 serves as the catalytic Nucleophile. Ca(2+) is bound at residue histidine 189. Residue glutamate 222 is the Proton donor of the active site. Residues asparagine 285 and arginine 321 each contribute to the chloride site. Positions phenylalanine 326–leucine 343 are enriched in polar residues. The segment at phenylalanine 326–proline 346 is disordered. Cystine bridges form between cysteine 354-cysteine 360 and cysteine 425-cysteine 437.

Belongs to the glycosyl hydrolase 13 family. As to quaternary structure, monomer. It depends on Ca(2+) as a cofactor. The cofactor is chloride.

The enzyme catalyses Endohydrolysis of (1-&gt;4)-alpha-D-glucosidic linkages in polysaccharides containing three or more (1-&gt;4)-alpha-linked D-glucose units.. The sequence is that of Alpha-amylase from Tenebrio molitor (Yellow mealworm beetle).